Here is a 950-residue protein sequence, read N- to C-terminus: Glycine dehydrogenase (decarboxylating) (950 aa).

An N6-(pyridoxal phosphate)lysine modification is found at K698.

The protein belongs to the GcvP family. In terms of assembly, the glycine cleavage system is composed of four proteins: P, T, L and H. It depends on pyridoxal 5'-phosphate as a cofactor.

It carries out the reaction N(6)-[(R)-lipoyl]-L-lysyl-[glycine-cleavage complex H protein] + glycine + H(+) = N(6)-[(R)-S(8)-aminomethyldihydrolipoyl]-L-lysyl-[glycine-cleavage complex H protein] + CO2. Functionally, the glycine cleavage system catalyzes the degradation of glycine. The P protein binds the alpha-amino group of glycine through its pyridoxal phosphate cofactor; CO(2) is released and the remaining methylamine moiety is then transferred to the lipoamide cofactor of the H protein. This chain is Glycine dehydrogenase (decarboxylating), found in Neisseria meningitidis serogroup A / serotype 4A (strain DSM 15465 / Z2491).